Consider the following 38-residue polypeptide: Potassium channel toxin alpha-KTx 2.10 (38 aa).

3 disulfide bridges follow: Cys7–Cys29, Cys13–Cys34, and Cys17–Cys36.

Expressed by the venom gland.

It is found in the secreted. Functionally, blocks human voltage-gated potassium (Kv) channel Kv1.2/KCNA2. Does not inhibit human Kv1.1/KCNA1 at 100nM concentration. In Centruroides bonito (Scorpion), this protein is Potassium channel toxin alpha-KTx 2.10.